The sequence spans 97 residues: MAKEQTDRTTLDLFAHERRPGRPKTNPLSRDEQLRINKRNQLKRDKVRGLKRVELKLNAEAVEALNELAESRNMSRSELIEEMLMQQLAALRSQGIV.

A compositionally biased stretch (basic and acidic residues) spans 1-20 (MAKEQTDRTTLDLFAHERRP). Positions 1–30 (MAKEQTDRTTLDLFAHERRPGRPKTNPLSR) are disordered.

This is an uncharacterized protein from Escherichia coli O157:H7.